Consider the following 332-residue polypeptide: Beta-chimaerin (332 aa).

The Phorbol-ester/DAG-type zinc finger occupies Thr-78–Cys-128. In terms of domain architecture, Rho-GAP spans Cys-141–Phe-332.

It localises to the membrane. With respect to regulation, in the inactive state, the N terminus protrudes into the active site of the Rho-GAP domain, sterically blocking Rac binding. Phospholipid binding to the Phorbol-ester/DAG-type zinc-finger/C1 domain triggers the cooperative dissociation of these interactions, allowing the N-terminus to move out of the active site and thereby activating the enzyme. Its function is as follows. GTPase-activating protein for p21-rac. This Mus musculus (Mouse) protein is Beta-chimaerin (Chn2).